Here is an 80-residue protein sequence, read N- to C-terminus: Type VII secretion system accessory factor EsaB (80 aa).

This sequence belongs to the EsaB family.

Its subcellular location is the cytoplasm. Functionally, seems to regulate secreted factors that contribute to the establishment of persistent infections in the host. The protein is Type VII secretion system accessory factor EsaB of Staphylococcus aureus (strain COL).